The sequence spans 369 residues: Protein DUF642 L-GALACTONO-1,4-LACTONE-RESPONSIVE GENE 2 (369 aa).

A signal peptide spans 1-19 (MEGVTVVSFFLLFIATAMA). The N-linked (GlcNAc...) asparagine glycan is linked to asparagine 125.

Expressed in roots, seedlings and leaves.

The protein localises to the secreted. Its subcellular location is the cell wall. Functionally, involved in the regulation of testa rupture during seed germination. Required during roots and rosettes development. The chain is Protein DUF642 L-GALACTONO-1,4-LACTONE-RESPONSIVE GENE 2 from Arabidopsis thaliana (Mouse-ear cress).